The following is a 139-amino-acid chain: MPTINQLIRKGRVDKVKKSDSPALNKGYNSFKKSQTDVSSPQKRGVCTRVGTMTPKKPNSALRKYARVRLTNQIEVTAYIPGIGHNLQEHSVVLIRGGRVKDLPGVRYHIVRGALDTAGVQNRMQGRSKYGTKKPKDKK.

The interval 12-55 (RVDKVKKSDSPALNKGYNSFKKSQTDVSSPQKRGVCTRVGTMTP) is disordered. The segment covering 27–42 (GYNSFKKSQTDVSSPQ) has biased composition (polar residues). Aspartate 102 bears the 3-methylthioaspartic acid mark. The segment at 119 to 139 (GVQNRMQGRSKYGTKKPKDKK) is disordered. The span at 130–139 (YGTKKPKDKK) shows a compositional bias: basic residues.

Belongs to the universal ribosomal protein uS12 family. Part of the 30S ribosomal subunit. Contacts proteins S8 and S17. May interact with IF1 in the 30S initiation complex.

In terms of biological role, with S4 and S5 plays an important role in translational accuracy. Its function is as follows. Interacts with and stabilizes bases of the 16S rRNA that are involved in tRNA selection in the A site and with the mRNA backbone. Located at the interface of the 30S and 50S subunits, it traverses the body of the 30S subunit contacting proteins on the other side and probably holding the rRNA structure together. The combined cluster of proteins S8, S12 and S17 appears to hold together the shoulder and platform of the 30S subunit. In Shouchella clausii (strain KSM-K16) (Alkalihalobacillus clausii), this protein is Small ribosomal subunit protein uS12.